The primary structure comprises 199 residues: Large ribosomal subunit protein bL25 (199 aa).

It belongs to the bacterial ribosomal protein bL25 family. CTC subfamily. In terms of assembly, part of the 50S ribosomal subunit; part of the 5S rRNA/L5/L18/L25 subcomplex. Contacts the 5S rRNA. Binds to the 5S rRNA independently of L5 and L18.

In terms of biological role, this is one of the proteins that binds to the 5S RNA in the ribosome where it forms part of the central protuberance. The polypeptide is Large ribosomal subunit protein bL25 (Pelobacter propionicus (strain DSM 2379 / NBRC 103807 / OttBd1)).